We begin with the raw amino-acid sequence, 549 residues long: Small ribosomal subunit protein bS1 (549 aa).

S1 motif domains lie at 21 to 87 (GSIV…LSRE), 105 to 171 (KATV…VSRR), 192 to 260 (GSEV…LGLK), 277 to 347 (NSKL…LGLK), 364 to 434 (GDKV…LGIK), and 451 to 512 (GAVV…LSVK).

Belongs to the bacterial ribosomal protein bS1 family.

Functionally, binds mRNA; thus facilitating recognition of the initiation point. It is needed to translate mRNA with a short Shine-Dalgarno (SD) purine-rich sequence. In Haemophilus influenzae (strain ATCC 51907 / DSM 11121 / KW20 / Rd), this protein is Small ribosomal subunit protein bS1 (rpsA).